A 468-amino-acid chain; its full sequence is 6-phospho-beta-galactosidase (468 aa).

D-galactose 6-phosphate contacts are provided by Gln-19, His-116, Asn-159, Glu-160, and Asn-297. The active-site Proton donor is Glu-160. Glu-375 serves as the catalytic Nucleophile. Residues Ser-428, Trp-429, Lys-435, and Tyr-437 each coordinate D-galactose 6-phosphate.

This sequence belongs to the glycosyl hydrolase 1 family.

It catalyses the reaction a 6-phospho-beta-D-galactoside + H2O = D-galactose 6-phosphate + an alcohol. The protein operates within carbohydrate metabolism; lactose degradation; D-galactose 6-phosphate and beta-D-glucose from lactose 6-phosphate: step 1/1. The sequence is that of 6-phospho-beta-galactosidase from Streptococcus agalactiae serotype III (strain NEM316).